Here is a 314-residue protein sequence, read N- to C-terminus: Methionyl-tRNA formyltransferase (314 aa).

113-116 serves as a coordination point for (6S)-5,6,7,8-tetrahydrofolate; that stretch reads SLLP.

This sequence belongs to the Fmt family.

The catalysed reaction is L-methionyl-tRNA(fMet) + (6R)-10-formyltetrahydrofolate = N-formyl-L-methionyl-tRNA(fMet) + (6S)-5,6,7,8-tetrahydrofolate + H(+). In terms of biological role, attaches a formyl group to the free amino group of methionyl-tRNA(fMet). The formyl group appears to play a dual role in the initiator identity of N-formylmethionyl-tRNA by promoting its recognition by IF2 and preventing the misappropriation of this tRNA by the elongation apparatus. The protein is Methionyl-tRNA formyltransferase of Stutzerimonas stutzeri (strain A1501) (Pseudomonas stutzeri).